Here is a 1009-residue protein sequence, read N- to C-terminus: Protein WBSCR14 homolog (1009 aa).

4 disordered regions span residues 1 to 20, 304 to 354, 488 to 531, and 686 to 728; these read MSRG…PHDD, MSLG…LHQM, NNQP…DPMM, and ILES…EQEA. Polar residues-rich tracts occupy residues 324 to 350 and 499 to 508; these read RTPT…SSAS and RSNLLPTQND. Over residues 511–526 the composition is skewed to low complexity; that stretch reads LPQFLQSTQPTPQPQS. Residues 686–695 are compositionally biased toward polar residues; it reads ILESPSTSGD. The bHLH domain occupies 803–856; the sequence is RKRILHLHAEQNRRSALKDGFDQLMDIIPDLYSGGVKPTNAVVLAKSADHIRRL. The tract at residues 856-877 is leucine-zipper; it reads LQAEKWDKTQKIDEAKAKIEKL.

Expressed in intestine, neurons, muscle, hypodermis, excretory cell and other tissues.

Its subcellular location is the nucleus. The protein localises to the cytoplasm. It is found in the mitochondrion. Functionally, transcription factor that binds to the E box motif 5'-CACGTG-3', probably in a heterodimeric complex with mxl-2. Involved in modulating longevity in response to TOR signaling, dietary restriction, the decline in protein homeostasis associated with normal aging, germline signaling and the insulin-like signaling pathway. Plays a role in autophagy. Involved in regulating migration of the ray 1 precursor cells in the male tail, acting in concert with Wnt and semaphorin signaling pathways. Regulates transcription of genes encoding extracellular matrix (ECM) components which may contribute to the substratum required for migration of the neighboring ray 1 precursor cells. Involved in repressing infection by the microsporidian pathogen N.parisii, probably acting independently of its canonical partner, mxl-2. The chain is Protein WBSCR14 homolog (mml-1) from Caenorhabditis elegans.